The following is an 82-amino-acid chain: Small ribosomal subunit protein bS16 (82 aa).

Belongs to the bacterial ribosomal protein bS16 family.

The sequence is that of Small ribosomal subunit protein bS16 from Deinococcus deserti (strain DSM 17065 / CIP 109153 / LMG 22923 / VCD115).